A 658-amino-acid chain; its full sequence is Glycogen debranching enzyme (658 aa).

Asp336 (nucleophile) is an active-site residue. The active-site Proton donor is the Glu371.

This sequence belongs to the glycosyl hydrolase 13 family.

The enzyme catalyses Hydrolysis of (1-&gt;6)-alpha-D-glucosidic linkages to branches with degrees of polymerization of three or four glucose residues in limit dextrin.. The protein operates within glycan degradation; glycogen degradation. Its function is as follows. Removes maltotriose and maltotetraose chains that are attached by 1,6-alpha-linkage to the limit dextrin main chain, generating a debranched limit dextrin. The chain is Glycogen debranching enzyme from Klebsiella pneumoniae subsp. pneumoniae (strain ATCC 700721 / MGH 78578).